A 201-amino-acid chain; its full sequence is 3-isopropylmalate dehydratase small subunit (201 aa).

It belongs to the LeuD family. LeuD type 1 subfamily. Heterodimer of LeuC and LeuD.

The catalysed reaction is (2R,3S)-3-isopropylmalate = (2S)-2-isopropylmalate. Its pathway is amino-acid biosynthesis; L-leucine biosynthesis; L-leucine from 3-methyl-2-oxobutanoate: step 2/4. Functionally, catalyzes the isomerization between 2-isopropylmalate and 3-isopropylmalate, via the formation of 2-isopropylmaleate. The polypeptide is 3-isopropylmalate dehydratase small subunit (Shigella flexneri serotype 5b (strain 8401)).